The chain runs to 370 residues: Actin-related protein 2/3 complex subunit 1A (370 aa).

WD repeat units lie at residues 6-45, 50-89, 140-179, 202-241, 244-284, and 322-365; these read FLLEPITCHAWNRDRTQIALSPNNHEVHIYKKNGSQWTKA, EHNGHITGIDWAPKSDRIVTCGADRNAYVWSQKDGIWKPT, PIRSTVLSLDWHPNNVLLAAGSCDFKCRVFSAYIKEVDEK, GTGGWVHGVSFSASGNRLAWVSHDSTVSVADASKSVQVST, TEFL…TFVS, and LHQN…SSIQ.

It belongs to the WD repeat ARPC1 family. As to quaternary structure, probable component of the Arp2/3 complex in which it may replace ARPC1B.

The protein resides in the cytoplasm. The protein localises to the cytoskeleton. It is found in the nucleus. Its function is as follows. Probably functions as a component of the Arp2/3 complex which is involved in regulation of actin polymerization and together with an activating nucleation-promoting factor (NPF) mediates the formation of branched actin networks. In addition to its role in the cytoplasmic cytoskeleton, the Arp2/3 complex also promotes actin polymerization in the nucleus, thereby regulating gene transcription and repair of damaged DNA. In Mus musculus (Mouse), this protein is Actin-related protein 2/3 complex subunit 1A (Arpc1a).